The sequence spans 807 residues: DNA gyrase subunit B (807 aa).

A Toprim domain is found at serine 429–proline 543. The Mg(2+) site is built by glutamate 435, aspartate 508, and aspartate 510.

The protein belongs to the type II topoisomerase GyrB family. As to quaternary structure, heterotetramer, composed of two GyrA and two GyrB chains. In the heterotetramer, GyrA contains the active site tyrosine that forms a transient covalent intermediate with DNA, while GyrB binds cofactors and catalyzes ATP hydrolysis. Mg(2+) is required as a cofactor. It depends on Mn(2+) as a cofactor. Ca(2+) serves as cofactor.

The protein localises to the cytoplasm. It carries out the reaction ATP-dependent breakage, passage and rejoining of double-stranded DNA.. A type II topoisomerase that negatively supercoils closed circular double-stranded (ds) DNA in an ATP-dependent manner to modulate DNA topology and maintain chromosomes in an underwound state. Negative supercoiling favors strand separation, and DNA replication, transcription, recombination and repair, all of which involve strand separation. Also able to catalyze the interconversion of other topological isomers of dsDNA rings, including catenanes and knotted rings. Type II topoisomerases break and join 2 DNA strands simultaneously in an ATP-dependent manner. This chain is DNA gyrase subunit B, found in Rickettsia conorii (strain ATCC VR-613 / Malish 7).